We begin with the raw amino-acid sequence, 404 residues long: Probable protein phosphatase 1N (404 aa).

The PPM-type phosphatase domain maps to 59–319 (RFGASAVQGW…DNMTCMVVCF (261 aa)). Positions 96, 97, 267, and 310 each coordinate Mn(2+).

It belongs to the PP2C family. The cofactor is Mg(2+). Mn(2+) serves as cofactor.

The enzyme catalyses O-phospho-L-seryl-[protein] + H2O = L-seryl-[protein] + phosphate. It catalyses the reaction O-phospho-L-threonyl-[protein] + H2O = L-threonyl-[protein] + phosphate. The polypeptide is Probable protein phosphatase 1N (Ppm1n) (Mus musculus (Mouse)).